Here is a 430-residue protein sequence, read N- to C-terminus: Asparagine--tRNA ligase (430 aa).

The protein belongs to the class-II aminoacyl-tRNA synthetase family. In terms of assembly, homodimer.

It is found in the cytoplasm. The catalysed reaction is tRNA(Asn) + L-asparagine + ATP = L-asparaginyl-tRNA(Asn) + AMP + diphosphate + H(+). In Staphylococcus aureus (strain MSSA476), this protein is Asparagine--tRNA ligase.